Here is a 200-residue protein sequence, read N- to C-terminus: Large ribosomal subunit protein uL4 (200 aa).

Residues 43 to 71 (RAQKTRAEVSGSGKKPWRQKGTGRARSGD) form a disordered region.

It belongs to the universal ribosomal protein uL4 family. Part of the 50S ribosomal subunit.

In terms of biological role, one of the primary rRNA binding proteins, this protein initially binds near the 5'-end of the 23S rRNA. It is important during the early stages of 50S assembly. It makes multiple contacts with different domains of the 23S rRNA in the assembled 50S subunit and ribosome. Forms part of the polypeptide exit tunnel. In Actinobacillus pleuropneumoniae serotype 5b (strain L20), this protein is Large ribosomal subunit protein uL4.